Consider the following 112-residue polypeptide: Thioredoxin-like protein YdfQ (112 aa).

The Thioredoxin domain maps to 1 to 107; that stretch reads MKEMTGLHSL…LEQKLKRVYR (107 aa). C32 and C35 are joined by a disulfide.

This chain is Thioredoxin-like protein YdfQ (ydfQ), found in Bacillus subtilis (strain 168).